Consider the following 293-residue polypeptide: Diaminopimelate epimerase (293 aa).

Positions 17, 47, and 67 each coordinate substrate. Cysteine 76 acts as the Proton donor in catalysis. Substrate contacts are provided by residues 77–78 (GN), asparagine 164, asparagine 197, and 215–216 (ER). Cysteine 224 functions as the Proton acceptor in the catalytic mechanism. Substrate is bound at residue 225–226 (GS).

The protein belongs to the diaminopimelate epimerase family. Homodimer.

It localises to the cytoplasm. The catalysed reaction is (2S,6S)-2,6-diaminopimelate = meso-2,6-diaminopimelate. The protein operates within amino-acid biosynthesis; L-lysine biosynthesis via DAP pathway; DL-2,6-diaminopimelate from LL-2,6-diaminopimelate: step 1/1. In terms of biological role, catalyzes the stereoinversion of LL-2,6-diaminopimelate (L,L-DAP) to meso-diaminopimelate (meso-DAP), a precursor of L-lysine and an essential component of the bacterial peptidoglycan. The protein is Diaminopimelate epimerase of Rhodopseudomonas palustris (strain HaA2).